Here is a 1152-residue protein sequence, read N- to C-terminus: Calcium-activated potassium channel subunit alpha-1 (1152 aa).

Positions 1–37 (MSSNIHANHLSLDASSSSSSSSSSSSSSSSSSSSVHE) are disordered. Topologically, residues 1–60 (MSSNIHANHLSLDASSSSSSSSSSSSSSSSSSSSVHEPKMDALIIPVTMEVPCDSRGQRM) are extracellular. Positions 15-34 (SSSSSSSSSSSSSSSSSSSS) are enriched in low complexity. The helical transmembrane segment at 61–81 (WWAFLASSMVTFFGGLFIILL) threads the bilayer. The Cytoplasmic segment spans residues 82 to 152 (WRTLKYLWTV…MISAQTLTGR (71 aa)). S-palmitoyl cysteine attachment occurs at residues Cys-92, Cys-93, and Cys-95. The chain crosses the membrane as a helical span at residues 153 to 173 (VLVVLVFALSIGALVIYFIDS). The Extracellular portion of the chain corresponds to 174–188 (SNPIESCQNFYKDFT). The helical transmembrane segment at 189–209 (LQIDMAFNVFFLLYFGLRFIA) threads the bilayer. The Cytoplasmic portion of the chain corresponds to 210 to 213 (ANDK). Residues 214 to 234 (LWFWLEVNSVVDFFTVPPVFV) traverse the membrane as a helical segment. The Extracellular segment spans residues 235–238 (SVYL). Residues 239-259 (NRSWLGLRFLRALRLIQFSEI) form a helical; Voltage-sensor membrane-spanning segment. Over 260–274 (LQFLNILKTSNSIKL) the chain is Cytoplasmic. Residues 275–295 (VNLLSIFISTWLTAAGFIHLV) traverse the membrane as a helical segment. Residues 296–309 (ENSGDPWENFQNNQ) are Extracellular-facing. An intramembrane region (pore-forming) is located at residues 310-332 (ALTYWECVYLLMVTMSTVGYGDV). Residues 326–329 (TVGY) carry the Selectivity for potassium motif. The Extracellular segment spans residues 333–341 (YAKTTLGRL). A helical transmembrane segment spans residues 342–362 (FMVFFILGGLAMFASYVPEII). The Cytoplasmic segment spans residues 363–1152 (ELIGNRKKYG…KQKYVQEERL (790 aa)). Residues 381-523 (RKHIVVCGHI…WNWKEGDDAI (143 aa)) form the RCK N-terminal 1 domain. Residues Glu-413, Gln-436, and Glu-438 each coordinate Mg(2+). The segment at 530–550 (LGFIAQSCLAQGLSTMLANLF) is segment S7. Positions 587 to 607 (LSFPTVCELCFVKLKLLMIAI) are segment S8. The interval 651-655 (CKACH) is heme-binding motif. The disordered stretch occupies residues 675–703 (EQPSTLSPKKKQRNGGMRNSPSSSPKLMR). A Phosphothreonine modification is found at Thr-679. Ser-681, Ser-694, and Ser-698 each carry phosphoserine. Residues 753-773 (VLSGHVVVCIFGDVSSALIGL) are segment S9. An RCK N-terminal 2 domain is found at 755 to 899 (SGHVVVCIFG…MDRSSPDNSP (145 aa)). Position 886 is a phosphothreonine (Thr-886). Phosphoserine is present on residues Ser-894 and Ser-898. Positions 919 to 941 (TELVNDTNVQFLDQDDDDDPDTE) match the Calcium bowl motif. Gln-928, Asp-931, Asp-934, and Asp-936 together coordinate Ca(2+). A segment S10 region spans residues 948-968 (FACGTAFAVSVLDSLMSATYF). A compositionally biased stretch (low complexity) spans 1102-1127 (RASLSHSSHSSQSSSKKSSSVHSIPS). The tract at residues 1102–1152 (RASLSHSSHSSQSSSKKSSSVHSIPSTANRQNRPKSRESRDKQKYVQEERL) is disordered. Residues 1136 to 1152 (KSRESRDKQKYVQEERL) show a composition bias toward basic and acidic residues. Phosphoserine occurs at positions 1137 and 1140.

It belongs to the potassium channel family. Calcium-activated (TC 1.A.1.3) subfamily. KCa1.1/KCNMA1 sub-subfamily. Homotetramer; which constitutes the calcium-activated potassium channel. Interacts with beta subunits KCNMB1, KCNMB2, KCNMB3 and KCNMB4. Interacts with gamma subunits LRRC26, LRRC38, LRRC52 and LRRC55. Beta and gamma subunits are accessory, and modulate its activity. Interacts with RAB11B. Phosphorylated. Phosphorylation by kinases such as PKA and/or PKG. In smooth muscles, phosphorylation affects its activity. Post-translationally, palmitoylation by ZDHHC22 and ZDHHC23 within the intracellular linker between the S0 and S1 transmembrane domains regulates localization to the plasma membrane. Depalmitoylated by LYPLA1 and LYPLAL1, leading to retard exit from the trans-Golgi network.

It localises to the cell membrane. The catalysed reaction is K(+)(in) = K(+)(out). Ethanol and carbon monoxide-bound heme increase channel activation. Heme inhibits channel activation. Functionally, potassium channel activated by both membrane depolarization or increase in cytosolic Ca(2+) that mediates export of K(+). It is also activated by the concentration of cytosolic Mg(2+). Its activation dampens the excitatory events that elevate the cytosolic Ca(2+) concentration and/or depolarize the cell membrane. It therefore contributes to repolarization of the membrane potential. Plays a key role in controlling excitability in a number of systems, such as regulation of the contraction of smooth muscle, the tuning of hair cells in the cochlea, regulation of transmitter release, and innate immunity. In smooth muscles, its activation by high level of Ca(2+), caused by ryanodine receptors in the sarcoplasmic reticulum, regulates the membrane potential. In cochlea cells, its number and kinetic properties partly determine the characteristic frequency of each hair cell and thereby helps to establish a tonotopic map. Kinetics of KCNMA1 channels are determined by alternative splicing, phosphorylation status and its combination with modulating beta subunits. Highly sensitive to both iberiotoxin (IbTx) and charybdotoxin (CTX). The sequence is that of Calcium-activated potassium channel subunit alpha-1 (KCNMA1) from Sus scrofa (Pig).